The sequence spans 319 residues: Iron-sulfur cluster transfer protein NUBPL (319 aa).

Residues 1-38 (MGTWRRLLLFGGVSLRGGGAATVPPRGCRALGCGRQLL) constitute a mitochondrion transit peptide. 75–82 (GKGGVGKS) serves as a coordination point for ATP.

Belongs to the Mrp/NBP35 ATP-binding proteins family. It depends on [4Fe-4S] cluster as a cofactor.

The protein localises to the mitochondrion. Functionally, iron-sulfur cluster transfer protein involved in the assembly of the mitochondrial membrane respiratory chain NADH dehydrogenase (Complex I). May deliver one or more Fe-S clusters to complex I subunits. The sequence is that of Iron-sulfur cluster transfer protein NUBPL (Nubpl) from Mus musculus (Mouse).